Here is a 49-residue protein sequence, read N- to C-terminus: Large ribosomal subunit protein bL33B (49 aa).

Belongs to the bacterial ribosomal protein bL33 family.

The polypeptide is Large ribosomal subunit protein bL33B (Bacillus cytotoxicus (strain DSM 22905 / CIP 110041 / 391-98 / NVH 391-98)).